A 210-amino-acid chain; its full sequence is N-(5'-phosphoribosyl)anthranilate isomerase (210 aa).

This sequence belongs to the TrpF family.

It carries out the reaction N-(5-phospho-beta-D-ribosyl)anthranilate = 1-(2-carboxyphenylamino)-1-deoxy-D-ribulose 5-phosphate. Its pathway is amino-acid biosynthesis; L-tryptophan biosynthesis; L-tryptophan from chorismate: step 3/5. The chain is N-(5'-phosphoribosyl)anthranilate isomerase from Methanococcus aeolicus (strain ATCC BAA-1280 / DSM 17508 / OCM 812 / Nankai-3).